The sequence spans 79 residues: Small ribosomal subunit protein bS18 (79 aa).

This sequence belongs to the bacterial ribosomal protein bS18 family. Part of the 30S ribosomal subunit. Forms a tight heterodimer with protein bS6.

Functionally, binds as a heterodimer with protein bS6 to the central domain of the 16S rRNA, where it helps stabilize the platform of the 30S subunit. The polypeptide is Small ribosomal subunit protein bS18 (Rhodopseudomonas palustris (strain HaA2)).